A 490-amino-acid polypeptide reads, in one-letter code: Glutamate--tRNA ligase (490 aa).

The short motif at 12-22 (PSPTGTPHVGL) is the 'HIGH' region element. A 'KMSKS' region motif is present at residues 256–260 (KLSKR). Lys-259 is a binding site for ATP.

Belongs to the class-I aminoacyl-tRNA synthetase family. Glutamate--tRNA ligase type 1 subfamily. Monomer.

The protein localises to the cytoplasm. The enzyme catalyses tRNA(Glu) + L-glutamate + ATP = L-glutamyl-tRNA(Glu) + AMP + diphosphate. Its function is as follows. Catalyzes the attachment of glutamate to tRNA(Glu) in a two-step reaction: glutamate is first activated by ATP to form Glu-AMP and then transferred to the acceptor end of tRNA(Glu). This is Glutamate--tRNA ligase from Mycobacterium sp. (strain JLS).